A 262-amino-acid chain; its full sequence is Lysine 5,6-aminomutase beta subunit (262 aa).

Residues 120–262 form the B12-binding domain; that stretch reads KIVVVGASTG…VKTLNDRMNS (143 aa). Adenosylcob(III)alamin is bound by residues 130 to 136 and H133; that span reads TDAHTVG. Residue K144 is modified to N6-(pyridoxal phosphate)lysine. Residues 185-192, 219-223, and 239-244 each bind adenosylcob(III)alamin; these read LVSQTVTQ, LCGGP, and FGPGRF.

The protein belongs to the KamE family. In terms of assembly, heterotetramer of 2 alpha and 2 beta subunits. Adenosylcob(III)alamin is required as a cofactor. It depends on pyridoxal 5'-phosphate as a cofactor.

It catalyses the reaction (3S)-3,6-diaminohexanoate = (3S,5S)-3,5-diaminohexanoate. The enzyme catalyses D-lysine = (2R,5S)-2,5-diaminohexanoate. Its pathway is amino-acid metabolism; lysine degradation. Rapidly inactivated in the presence of D-lysine and to a lesser extent in the absence of adenosylcobalamin (Adocbl). Activity is stable in the presence of Adocbl when D-lysine is absent. Adocbl imparts thermal stability at 37 degrees Celsius. Its function is as follows. Catalyzes the migration of the L-beta-lysine and D-lysine epsilon amino group to the delta carbon to produce 3,5-diaminohexanoate and 2,5-diaminohexanoate, respectively. This is Lysine 5,6-aminomutase beta subunit (kamE) from Acetoanaerobium sticklandii (strain ATCC 12662 / DSM 519 / JCM 1433 / CCUG 9281 / NCIMB 10654 / HF) (Clostridium sticklandii).